The following is a 426-amino-acid chain: MKKFILFLIILLFSIYFLNVSSAEVCPFKDGFIIIYHDIGYDKLFGYTYNDSEILYFNNKNLMDITPISDYYFPELYHNITYFECGSTNNLTILSFGYFYFPKNGDGIVFLGVLVYTTKNNKINYTEKILWADVFYSVDDFDISPPACSPNEALLVYCYKMKADYPENILVLINNTNITELKKFEDDDYYTTFQHYIYQPIFIFTTYDSKAKKFYILDGRLSNTSFPLYSYYGGKIHFEDNITLPKYENISWECMDFYSINGTLYIVMKKLNCSNINYAGWYEDYLNQKPYLLIWKNKTIKIISNCSNPYYFVKIKGGEIPIEKSYLKKIFGNKYESIRITDLAYNNGILLIETNENHKLHYYIVKNNSIEEIKLKNIIKLYKKKHSLWDDIKKELEPKIYWVIHNWYIIVLIIAGLLWMAILWKK.

The signal sequence occupies residues 1–23; it reads MKKFILFLIILLFSIYFLNVSSA.

This is an uncharacterized protein from Methanocaldococcus jannaschii (strain ATCC 43067 / DSM 2661 / JAL-1 / JCM 10045 / NBRC 100440) (Methanococcus jannaschii).